We begin with the raw amino-acid sequence, 546 residues long: Carotenoid 9,10(9',10')-cleavage dioxygenase (546 aa).

Fe cation is bound by residues H226, H274, H340, and H530.

Belongs to the carotenoid oxygenase family. It depends on Fe(2+) as a cofactor. In terms of tissue distribution, in vegetative and floral tissues.

The protein resides in the cytoplasm. It catalyses the reaction all-trans-zeaxanthin + 2 O2 = 4,9-dimethyldodeca-2,4,6,8,10-pentaenedial + 2 (3R)-hydroxy-beta-ionone. Functionally, cleaves a variety of carotenoids symmetrically at both the 9-10 and 9'-10' double bonds. Catalyzes the formation of 4,9-dimethyldodeca-2,4,6,8,10-pentaene-1,12-dialdehyde and probably hydroxydihydro-beta-ionone from zeaxanthin. In Crocus sativus (Saffron), this protein is Carotenoid 9,10(9',10')-cleavage dioxygenase (CCD).